A 213-amino-acid chain; its full sequence is Nucleolar protein 12 (213 aa).

Positions 33–96 (GFHKRKVERK…RLVTAKTESV (64 aa)) form a coiled coil. The interval 118-213 (ARLLGLTPPE…LTGKARHSGE (96 aa)) is disordered. Basic residues-rich tracts occupy residues 170–182 (AHSRKKVKRKHPR) and 198–213 (KAQRRRLTGKARHSGE).

The protein belongs to the RRP17 family. In terms of assembly, interacts with KIAA1191.

It is found in the nucleus. The protein resides in the nucleolus. Its subcellular location is the cytoplasm. In terms of biological role, multifunctional RNA binding protein that plays a role in RNA metabolism and DNA maintenance. Participates in the resolution of DNA stress and the maintenance of genome integrity by localizing to sites of DNA insults. Also plays a role in proper nucleolar organization by limiting nucleolar size and regulating nucleolar number. Mechanistically, regulates the nucleolar levels of fibrillarin and nucleolin, two key players in pre-rRNA processing and ribosome assembly. This chain is Nucleolar protein 12 (NOL12), found in Homo sapiens (Human).